A 471-amino-acid chain; its full sequence is BPI fold-containing family B member 1 (471 aa).

The signal sequence occupies residues 1-18; it reads MTNPWIVSLLLGATLVQA. Residues Asn-150, Asn-157, Asn-260, and Asn-397 are each glycosylated (N-linked (GlcNAc...) asparagine). Residues Cys-154 and Cys-197 are joined by a disulfide bond.

It belongs to the BPI/LBP/Plunc superfamily. Plunc family.

It is found in the secreted. In terms of biological role, may play a role in innate immunity in mouth, nose and lungs. Binds bacterial lipopolysaccharide (LPS) and modulates the cellular responses to LPS. This Rattus norvegicus (Rat) protein is BPI fold-containing family B member 1 (Bpifb1).